The chain runs to 256 residues: uncharacterized protein (256 aa).

7 helical membrane-spanning segments follow: residues 32-52, 59-79, 112-132, 156-176, 184-204, 207-227, and 230-250; these read ILAS…GSYF, FAFP…AYGG, YAGN…TGLF, LFFR…IPMS, LFTM…HSIA, CTFA…MGAV, and LIPV…WMYY.

It belongs to the FNT transporter (TC 1.A.16) family.

The protein localises to the cell membrane. This is an uncharacterized protein from Bacillus subtilis (strain 168).